Here is a 230-residue protein sequence, read N- to C-terminus: Orotidine 5'-phosphate decarboxylase (230 aa).

Substrate-binding positions include aspartate 11, lysine 34, aspartate 61–threonine 70, threonine 117, arginine 179, glutamine 188, glycine 208, and arginine 209. The active-site Proton donor is lysine 63.

Belongs to the OMP decarboxylase family. Type 1 subfamily. Homodimer.

The enzyme catalyses orotidine 5'-phosphate + H(+) = UMP + CO2. The protein operates within pyrimidine metabolism; UMP biosynthesis via de novo pathway; UMP from orotate: step 2/2. Functionally, catalyzes the decarboxylation of orotidine 5'-monophosphate (OMP) to uridine 5'-monophosphate (UMP). This chain is Orotidine 5'-phosphate decarboxylase, found in Streptococcus pyogenes serotype M6 (strain ATCC BAA-946 / MGAS10394).